The sequence spans 922 residues: Pyruvate dehydrogenase E1 component (922 aa).

Homodimer. Part of an unusual ODH/PDH supercomplex, consisting of AceE (E1), AceF (E2), and Lpd (E3) together with OdhA (E1+E2). The cofactor is Mg(2+). Thiamine diphosphate serves as cofactor.

It catalyses the reaction N(6)-[(R)-lipoyl]-L-lysyl-[protein] + pyruvate + H(+) = N(6)-[(R)-S(8)-acetyldihydrolipoyl]-L-lysyl-[protein] + CO2. In terms of biological role, is a specific component of the pyruvate dehydrogenase (PDH) complex, that catalyzes the overall conversion of pyruvate to acetyl-CoA and CO(2). AceE has reductase activity with pyruvate but does not react with 2-oxoglutarate. This chain is Pyruvate dehydrogenase E1 component (aceE), found in Corynebacterium glutamicum (strain ATCC 13032 / DSM 20300 / JCM 1318 / BCRC 11384 / CCUG 27702 / LMG 3730 / NBRC 12168 / NCIMB 10025 / NRRL B-2784 / 534).